Reading from the N-terminus, the 51-residue chain is Putative inactivation escape 1 protein (51 aa).

As to expression, highly expressed in pancreas, heart and liver followed by brain, placenta, lung, skeletal muscle and kidney. Mostly expressed in females.

The chain is Putative inactivation escape 1 protein (INE1) from Homo sapiens (Human).